The primary structure comprises 444 residues: Phosphoglucosamine mutase (444 aa).

Serine 102 acts as the Phosphoserine intermediate in catalysis. Positions 102, 241, 243, and 245 each coordinate Mg(2+). A Phosphoserine modification is found at serine 102.

Belongs to the phosphohexose mutase family. Mg(2+) serves as cofactor. In terms of processing, activated by phosphorylation.

It catalyses the reaction alpha-D-glucosamine 1-phosphate = D-glucosamine 6-phosphate. Functionally, catalyzes the conversion of glucosamine-6-phosphate to glucosamine-1-phosphate. The protein is Phosphoglucosamine mutase of Erwinia tasmaniensis (strain DSM 17950 / CFBP 7177 / CIP 109463 / NCPPB 4357 / Et1/99).